The chain runs to 198 residues: Probable GTP-binding protein EngB (198 aa).

The region spanning 22–195 (HRNEVAFVGR…IDKLFLEFAT (174 aa)) is the EngB-type G domain. GTP is bound by residues 30 to 37 (GRSNVGKS), 57 to 61 (GKTRL), 75 to 78 (DLPG), 142 to 145 (TKSD), and 174 to 176 (YSS). Positions 37 and 59 each coordinate Mg(2+).

Belongs to the TRAFAC class TrmE-Era-EngA-EngB-Septin-like GTPase superfamily. EngB GTPase family. It depends on Mg(2+) as a cofactor.

In terms of biological role, necessary for normal cell division and for the maintenance of normal septation. This is Probable GTP-binding protein EngB from Clostridium botulinum (strain Eklund 17B / Type B).